We begin with the raw amino-acid sequence, 49 residues long: Large ribosomal subunit protein bL32c (49 aa).

Residues 1 to 23 form a disordered region; the sequence is MTPKKRKSKSKKNLRKTNWKKKA.

This sequence belongs to the bacterial ribosomal protein bL32 family.

The protein resides in the plastid. Its subcellular location is the chloroplast. This chain is Large ribosomal subunit protein bL32c, found in Oltmannsiellopsis viridis (Marine flagellate).